The chain runs to 379 residues: Glutamate 5-kinase (379 aa).

Lys17 lines the ATP pocket. The substrate site is built by Ser57, Asp144, and Asn156. Residue 176–177 (SD) participates in ATP binding. Residues 282–359 (SGILMIDQGA…EEIESILGYE (78 aa)) form the PUA domain.

Belongs to the glutamate 5-kinase family.

The protein resides in the cytoplasm. It catalyses the reaction L-glutamate + ATP = L-glutamyl 5-phosphate + ADP. The protein operates within amino-acid biosynthesis; L-proline biosynthesis; L-glutamate 5-semialdehyde from L-glutamate: step 1/2. Its function is as follows. Catalyzes the transfer of a phosphate group to glutamate to form L-glutamate 5-phosphate. This chain is Glutamate 5-kinase, found in Bartonella henselae (strain ATCC 49882 / DSM 28221 / CCUG 30454 / Houston 1) (Rochalimaea henselae).